Consider the following 244-residue polypeptide: NAD-dependent protein deacylase SIR2rp3 (244 aa).

Positions 1 to 239 (MRRPNGMIAI…PAWADEVLHG (239 aa)) constitute a Deacetylase sirtuin-type domain. 13–32 (GAGISAESGISTFRDQNGLW) contributes to the NAD(+) binding site. The substrate site is built by tyrosine 57 and arginine 60. 95–98 (QNID) provides a ligand contact to NAD(+). Histidine 113 (proton acceptor) is an active-site residue. 2 residues coordinate Zn(2+): cysteine 121 and cysteine 141. NAD(+) is bound by residues 181 to 183 (GTS) and alanine 225.

It belongs to the sirtuin family. Class III subfamily. Zn(2+) is required as a cofactor.

Its subcellular location is the mitochondrion. It catalyses the reaction N(6)-malonyl-L-lysyl-[protein] + NAD(+) + H2O = 2''-O-malonyl-ADP-D-ribose + nicotinamide + L-lysyl-[protein]. The enzyme catalyses N(6)-succinyl-L-lysyl-[protein] + NAD(+) + H2O = 2''-O-succinyl-ADP-D-ribose + nicotinamide + L-lysyl-[protein]. It carries out the reaction N(6)-glutaryl-L-lysyl-[protein] + NAD(+) + H2O = 2''-O-glutaryl-ADP-D-ribose + nicotinamide + L-lysyl-[protein]. In terms of biological role, NAD-dependent lysine demalonylase, desuccinylase and deglutarylase that specifically removes malonyl, succinyl and glutaryl groups on target proteins. Has weak NAD-dependent protein deacetylase activity; however this activity may not be physiologically relevant in vivo. In Trypanosoma brucei brucei (strain 927/4 GUTat10.1), this protein is NAD-dependent protein deacylase SIR2rp3 (SIR2rp3).